A 345-amino-acid chain; its full sequence is Nuclear distribution protein nudE-like 1 (345 aa).

Residues 28–190 (QSFQEARDEL…LAVRERQQEV (163 aa)) adopt a coiled-coil conformation. The segment at 56 to 166 (VQAEQRNRDL…LDEKESLLVS (111 aa)) is self-association. Residues 64–189 (DLQADNQRLK…ELAVRERQQE (126 aa)) are interaction with KATNB1. The interval 114-133 (YVRELEQANDDLERAKRATI) is required for interaction with PAFAH1B1. Residues 175-345 (RDLRQELAVR…SAPGMLPLSV (171 aa)) are interaction with CENPF. Residues 189–256 (EVTRKSAPSS…SARISALNIV (68 aa)) are interaction with YWHAE. The tract at residues 191–345 (TRKSAPSSPT…SAPGMLPLSV (155 aa)) is interaction with NEFL. The segment at 195–256 (APSSPTLDCE…SARISALNIV (62 aa)) is interaction with KATNA1. Phosphoserine is present on S215. Positions 217-240 (PATPVGKGTENSFPSPKAIPNGFG) are disordered. Phosphothreonine is present on T219. S231 is subject to Phosphoserine. Residues 241–280 (TSPLTPSARISALNIVGDLLRKVGALESKLAACRNFAKDQ) are interaction with DISC1. Residue S242 is modified to Phosphoserine; by CDK1. Phosphothreonine; by CDK1 and MAPK1 is present on T245. The segment at 256–291 (VGDLLRKVGALESKLAACRNFAKDQASRKSYVPGSV) is required for localization to the centrosome and interaction with dynein, dynactin, tubulin gamma, PCM1 and PCNT. C273 is lipidated: S-palmitoyl cysteine; by ZDHHC2, ZDHHC3 and ZDHHC7. A disordered region spans residues 314-345 (KGAVNGFDPAPPPPGLGSSRPSSAPGMLPLSV). Over residues 329-339 (LGSSRPSSAPG) the composition is skewed to low complexity. S344 carries the post-translational modification Phosphoserine.

The protein belongs to the nudE family. Interacts with PLEKHM1 (via N- and C-terminus). Interacts with dynactin, PCM1 and PCNT. Interacts (via C-terminus) with CENPF. Self-associates. Interacts with DISC1, dynein, tubulin gamma, KATNA1, KATNB1, microtubules, PAFAHB1 and YWHAE. Interacts directly with NEFL and indirectly with NEFH. Interacts with ZNF365. Interacts with GTP-bound RAB9A; the interaction may lead to RAB9A-dynein motor tethering. In terms of processing, phosphorylated by CDK1 and MAPK1. Phosphorylated in mitosis. Phosphorylated by CDK5. Phosphorylation by CDK5 promotes interaction with KATNA1 and YWHAE. Palmitoylation at Cys-273 reduces affinity for dynein. As to expression, expressed in brain, liver, lung and testis (at protein level). Expressed in brain, epididymis, eye, heart, kidney, large intestine, liver, ovary, pancreas, prostate, skeletal muscle, smooth muscle, spleen, submaxillary gland, testis, thymus and thyroid. Within the brain expression is pronounced in the cortex, hippocampus, olfactory bulb, striatum, thalamic and hypothalamic structures and in the molecular layer of the cerebellum. Largely excluded from cortical progenitor cells which express NDE1.

The protein localises to the cytoplasm. The protein resides in the cytoskeleton. It is found in the microtubule organizing center. It localises to the centrosome. Its subcellular location is the chromosome. The protein localises to the centromere. The protein resides in the kinetochore. It is found in the spindle. Required for organization of the cellular microtubule array and microtubule anchoring at the centrosome. May regulate microtubule organization at least in part by targeting the microtubule severing protein KATNA1 to the centrosome. Also positively regulates the activity of the minus-end directed microtubule motor protein dynein. May enhance dynein-mediated microtubule sliding by targeting dynein to the microtubule plus ends. Required for several dynein- and microtubule-dependent processes such as the maintenance of Golgi integrity, the centripetal motion of secretory vesicles and the coupling of the nucleus and centrosome. Also required during brain development for the migration of newly formed neurons from the ventricular/subventricular zone toward the cortical plate. Plays a role, together with DISC1, in the regulation of neurite outgrowth. Required for mitosis in some cell types but appears to be dispensible for mitosis in cortical neuronal progenitors, which instead requires NDE1. Facilitates the polymerization of neurofilaments from the individual subunits NEFH and NEFL. Positively regulates lysosome peripheral distribution and ruffled border formation in osteoclasts. Plays a role, together with DISC1, in the regulation of neurite outgrowth. May act as a RAB9A/B effector that tethers RAB9-associated late endosomes to the dynein motor for their retrograde transport to the trans-Golgi network. This is Nuclear distribution protein nudE-like 1 from Mus musculus (Mouse).